The following is a 354-amino-acid chain: Replication-associated protein (354 aa).

In terms of domain architecture, CRESS-DNA virus Rep endonuclease spans 11–114 (SHRSPNTFLT…PLALFERGTF (104 aa)). Residues 18–21 (FLTY) carry the RCR-1 motif. E52 and H62 together coordinate a divalent metal cation. The RCR-2 signature appears at 60–65 (CLHALI). The active-site For DNA cleavage activity is Y100. Residues 100-103 (YITK) carry the RCR-3 motif. E104 contacts a divalent metal cation. The oligomerization stretch occupies residues 175 to 187 (SANKLFPDIQEEF). 228–235 (GPTRTGKS) lines the ATP pocket. Residues 251 to 269 (VDWSSYNEDTIYNIVDDIP) are transactivation. A Nuclear localization signal motif is present at residues 291–302 (KYGKKKKVQMKS).

It belongs to the geminiviridae Rep protein family. In terms of assembly, homooligomer. Rep binds to repeated DNA motifs (iterons). Forms the O-complex, which is a Rep-DNA complex involved in the initiation of RCR. Part of the C- and V-complexes which are RepA-Rep-DNA complexes involved in the c-sense and v-sense transcription. Mg(2+) serves as cofactor. Mn(2+) is required as a cofactor.

The protein localises to the host nucleus. Its function is as follows. Essential for the replication of viral ssDNA. The closed circular ssDNA genome is first converted to a superhelical dsDNA. Rep binds a specific region at the genome origin of replication. It introduces an endonucleolytic nick within the conserved sequence 5'-TAATATTAC-3' in the intergenic region of the genome present in all geminiviruses, thereby initiating the rolling circle replication (RCR). Following cleavage, binds covalently to the 5'-phosphate of DNA as a tyrosyl ester. The cleavage gives rise to a free 3'-OH that serves as a primer for the cellular DNA polymerase. The polymerase synthesizes the (+) strand DNA by rolling circle mechanism. After one round of replication, a Rep-catalyzed nucleotidyl transfer reaction releases a circular single-stranded virus genome, thereby terminating the replication. Displays origin-specific DNA cleavage, nucleotidyl transferase, ATPase and helicase activities. Acts as an inhibitor of C-sense gene transcription. The polypeptide is Replication-associated protein (Maize streak virus genotype C (isolate Set) (MSV)).